We begin with the raw amino-acid sequence, 592 residues long: Potassium-transporting ATPase potassium-binding subunit (592 aa).

13 helical membrane-spanning segments follow: residues 6–26 (WLETILFFVVLLALIKPFGTY), 67–87 (ACAMLLFNLVFAVSLFAMLLL), 136–156 (GFAVHNFTSAATGIVIAIAAI), 179–199 (LYILLPLSLIAAIFLVSQGVI), 283–303 (LSNIFEVFLILLISGGLTYTF), 312–332 (QGWALLAVMLAILILAIGVFY), 359–379 (FGLAGSALFATATTGTSCGAV), 389–409 (IGGMVPLSLILLSEVIFGGVG), 411–431 (GLYTMLAFVVIAVFVAGLMIG), 450–470 (ITTVLASGILVLIFSGIAMIL), 489–511 (LYAFASMSNNNGSAFAGLNGNTL), 519–539 (VAMLLGRFVPAVAVLAMAGGL), and 559–579 (FALWLTLVILIVGALTFFPAL).

It belongs to the KdpA family. In terms of assembly, the system is composed of three essential subunits: KdpA, KdpB and KdpC.

It is found in the cell inner membrane. In terms of biological role, part of the high-affinity ATP-driven potassium transport (or Kdp) system, which catalyzes the hydrolysis of ATP coupled with the electrogenic transport of potassium into the cytoplasm. This subunit binds the periplasmic potassium ions and delivers the ions to the membrane domain of KdpB through an intramembrane tunnel. This is Potassium-transporting ATPase potassium-binding subunit from Geotalea uraniireducens (strain Rf4) (Geobacter uraniireducens).